The sequence spans 714 residues: K(+)-insensitive pyrophosphate-energized proton pump (714 aa).

A signal peptide spans 1-20 (MRMTVIPIVILCGVLSVVYA). Transmembrane regions (helical) follow at residues 52-74 (LTRQ…WYLL), 85-105 (GAVL…RANL), 128-148 (ITGM…YFVL), and 166-186 (VSLG…GGIF). Substrate is bound at residue K188. D191, D195, N218, and D221 together coordinate Mg(2+). 6 helical membrane-spanning segments follow: residues 238-258 (AVSV…TPIL), 263-283 (VYPL…TFFV), 298-318 (GLIA…YATV), 333-353 (GTNL…IVVI), 383-403 (GLAV…GGII), and 411-431 (LFGT…IVAL). D439 contributes to the Mg(2+) binding site. 4 helical membrane-spanning segments follow: residues 470–490 (AVTK…LFAA), 522–542 (YVVA…GIAM), 591–611 (VIPS…VLLI), and 618–638 (AFAA…FVAI). Ca(2+)-binding residues include D648, D680, and D684. Residue K687 coordinates substrate. The chain crosses the membrane as a helical span at residues 693–713 (AVNPAIKITNIVALLLLAVLA).

This sequence belongs to the H(+)-translocating pyrophosphatase (TC 3.A.10) family. K(+)-insensitive subfamily. In terms of assembly, homodimer. Requires Mg(2+) as cofactor.

It localises to the acidocalcisome membrane. The catalysed reaction is diphosphate + H2O + H(+)(in) = 2 phosphate + 2 H(+)(out). Proton pump that utilizes the energy of pyrophosphate hydrolysis as the driving force for proton movement across the membrane. Generates a proton motive force. This chain is K(+)-insensitive pyrophosphate-energized proton pump, found in Agrobacterium fabrum (strain C58 / ATCC 33970) (Agrobacterium tumefaciens (strain C58)).